The primary structure comprises 103 residues: N(4)-acetylcytidine amidohydrolase (103 aa).

One can recognise an ASCH domain in the interval 6-101 (ITFFQRFQDD…QTQFYVIEFK (96 aa)). Lys-21 (proton acceptor) is an active-site residue. Thr-24 acts as the Nucleophile in catalysis. Glu-74 functions as the Proton donor in the catalytic mechanism.

Belongs to the N(4)-acetylcytidine amidohydrolase family.

It catalyses the reaction N(4)-acetylcytidine + H2O = cytidine + acetate + H(+). It carries out the reaction N(4)-acetyl-2'-deoxycytidine + H2O = 2'-deoxycytidine + acetate + H(+). The catalysed reaction is N(4)-acetylcytosine + H2O = cytosine + acetate + H(+). In terms of biological role, catalyzes the hydrolysis of N(4)-acetylcytidine (ac4C). The polypeptide is N(4)-acetylcytidine amidohydrolase (yqfB) (Escherichia coli O127:H6 (strain E2348/69 / EPEC)).